We begin with the raw amino-acid sequence, 90 residues long: [Leu8]-phyllolitorin (90 aa).

A signal peptide spans 1–30 (MSAVPFTRVLLISGFLAHLLLSTFVTLTVC). A propeptide spanning residues 31–48 (KEVTEESDDLSKRNVLQR) is cleaved from the precursor. The residue at position 49 (Gln49) is a Pyrrolidone carboxylic acid. Met57 carries the post-translational modification Methionine amide. Positions 61-90 (SLENTNRRSDEDMEISALFRGSPLKVKRSD) are excised as a propeptide.

It belongs to the bombesin/neuromedin-B/ranatensin family. In terms of tissue distribution, expressed by the skin glands.

It localises to the secreted. This is [Leu8]-phyllolitorin from Phyllomedusa sauvagei (Sauvage's leaf frog).